A 184-amino-acid chain; its full sequence is UPF0398 protein BCAH820_1652 (184 aa).

The protein belongs to the UPF0398 family.

The chain is UPF0398 protein BCAH820_1652 from Bacillus cereus (strain AH820).